The chain runs to 118 residues: Large ribosomal subunit protein bL19 (118 aa).

The protein belongs to the bacterial ribosomal protein bL19 family.

Its function is as follows. This protein is located at the 30S-50S ribosomal subunit interface and may play a role in the structure and function of the aminoacyl-tRNA binding site. This is Large ribosomal subunit protein bL19 from Salinispora arenicola (strain CNS-205).